A 222-amino-acid polypeptide reads, in one-letter code: Thiol:disulfide interchange protein DsbL (222 aa).

Positions 1 to 27 (MSKLGISSLFKTILLTAALAVSFTASA) are cleaved as a signal peptide. Residues 28-221 (FTEGTDYMVL…MADLIRELAS (194 aa)) enclose the Thioredoxin domain. A disulfide bond links Cys-56 and Cys-59.

It belongs to the thioredoxin family. DsbL subfamily. In terms of assembly, interacts with DsbI.

It localises to the periplasm. Functionally, involved in disulfide-bond formation. Acts by transferring its disulfide bond to other proteins. Part of a redox system composed of DsbI and DsbL that mediates formation of an essential disulfide bond in AssT. This Escherichia coli O6:H1 (strain CFT073 / ATCC 700928 / UPEC) protein is Thiol:disulfide interchange protein DsbL.